The primary structure comprises 602 residues: DNA damage-binding protein CMR1 (602 aa).

A disordered region spans residues 35–85; sequence KEVDNKSFSSPSSQKRRKTTKKPVIKKEISEPSRRSRRIAGIKSELEDPKQ. Residues 48–58 are compositionally biased toward basic residues; sequence QKRRKTTKKPV. Basic and acidic residues predominate over residues 59-68; the sequence is IKKEISEPSR. 6 WD repeats span residues 229–270, 291–328, 390–430, 446–484, 526–569, and 571–602; these read ICHN…NDTK, RNVS…STEL, LHDK…KSVY, NSRL…KLDN, GRWV…LAHL, and EQVG…YLFE.

The protein belongs to the WD repeat DDB2/WDR76 family.

DNA-binding protein that binds to both single- and double-stranded DNA. Binds preferentially to UV-damaged DNA. May be involved in DNA-metabolic processes. This is DNA damage-binding protein CMR1 from Candida albicans (strain SC5314 / ATCC MYA-2876) (Yeast).